Here is a 225-residue protein sequence, read N- to C-terminus: PKHD-type hydroxylase YbiX (225 aa).

The 100-residue stretch at 78-177 (TLSTPLFNRY…RVASFMWIQS (100 aa)) folds into the Fe2OG dioxygenase domain. 3 residues coordinate Fe cation: His-96, Asp-98, and His-158. 2-oxoglutarate is bound at residue Arg-168.

Fe(2+) serves as cofactor. L-ascorbate is required as a cofactor.

This chain is PKHD-type hydroxylase YbiX, found in Escherichia coli O6:K15:H31 (strain 536 / UPEC).